The chain runs to 121 residues: Centrocin 2 (121 aa).

Positions 1 to 20 (MMIKIAVVLCAVMATSMVFA) are cleaved as a signal peptide. Positions 21 to 50 (NDVKEQELADLLDLLISEEVSSPDDAVAES) are excised as a propeptide. Residues Trp-51 and Trp-59 each carry the 6'-bromotryptophan modification. A disulfide bridge links Cys-77 with Cys-112. A propeptide spanning residues 83-106 (SPQEARAKVLEAFPEMKESDLDEE) is cleaved from the precursor. Pyrrolidone carboxylic acid is present on Gln-107. His-119 is subject to Histidine amide.

As to quaternary structure, heterodimer of a light and a heavy chain, probably disulfide-linked.

Its function is as follows. Has antimicrobial activity against Gram-negative bacteria, Gram-positive bacteria and against fungi with minimum inhibitory concentration (MIC) between 0.78 uM and 50 uM. Shows little hemolytic activity at concentrations up to 12.5 uM but &gt;50% lysis at 100 uM. The protein is Centrocin 2 of Echinus esculentus (Sea urchin).